The chain runs to 131 residues: uncharacterized protein (131 aa).

Residues 1–67 (MCSARKLLRG…HSGEPIGDDY (67 aa)) form a disordered region. Position 14 is a phosphoserine (S14). The chain crosses the membrane as a helical span at residues 99-119 (VVVLFFWLMLWFLGLQALGLV).

Belongs to the FAM241 family.

Its subcellular location is the membrane. This is an uncharacterized protein from Mus musculus (Mouse).